The following is a 236-amino-acid chain: 6-carboxyhexanoate--CoA ligase (236 aa).

This sequence belongs to the BioW family. In terms of assembly, homodimer. It depends on Mg(2+) as a cofactor.

It catalyses the reaction heptanedioate + ATP + CoA = 6-carboxyhexanoyl-CoA + AMP + diphosphate. Its pathway is metabolic intermediate metabolism; pimeloyl-CoA biosynthesis; pimeloyl-CoA from pimelate: step 1/1. In terms of biological role, catalyzes the transformation of pimelate into pimeloyl-CoA with concomitant hydrolysis of ATP to AMP. In Methanococcus aeolicus (strain ATCC BAA-1280 / DSM 17508 / OCM 812 / Nankai-3), this protein is 6-carboxyhexanoate--CoA ligase.